The sequence spans 283 residues: Bis(5'-nucleosyl)-tetraphosphatase, symmetrical (283 aa).

It belongs to the Ap4A hydrolase family.

It carries out the reaction P(1),P(4)-bis(5'-adenosyl) tetraphosphate + H2O = 2 ADP + 2 H(+). Functionally, hydrolyzes diadenosine 5',5'''-P1,P4-tetraphosphate to yield ADP. In Pseudomonas paraeruginosa (strain DSM 24068 / PA7) (Pseudomonas aeruginosa (strain PA7)), this protein is Bis(5'-nucleosyl)-tetraphosphatase, symmetrical.